The sequence spans 443 residues: Probable D-serine dehydratase (443 aa).

K116 bears the N6-(pyridoxal phosphate)lysine mark.

The protein belongs to the serine/threonine dehydratase family. DsdA subfamily. Pyridoxal 5'-phosphate serves as cofactor.

It carries out the reaction D-serine = pyruvate + NH4(+). The polypeptide is Probable D-serine dehydratase (Bacillus cereus (strain G9842)).